Consider the following 272-residue polypeptide: MEQIGLIGYGSMADMIARQLLKHEQIKENELFIETRTKGERLRALMSDYPNVSADPLENWANTCQLILICVPPLHVIETMRRLYPYVNRNTHIVSIAAGVPLRLLEAETEAGISRVIPAITSEAEAGISLVVHSEALAAEKKERLNELLSVFSRVREIKESNLDVASNLTSSAPGFIAAIFEELALSAVRNSSLSKEEAFDFLIHSLYGTGKMLIEKNMSFEETLERVATKGGITGEGAEVIHASVPDVFDEVFERTLRKYELLTEQVGKQT.

This sequence belongs to the pyrroline-5-carboxylate reductase family.

It localises to the cytoplasm. The catalysed reaction is L-proline + NADP(+) = (S)-1-pyrroline-5-carboxylate + NADPH + 2 H(+). It catalyses the reaction L-proline + NAD(+) = (S)-1-pyrroline-5-carboxylate + NADH + 2 H(+). The protein operates within amino-acid biosynthesis; L-proline biosynthesis; L-proline from L-glutamate 5-semialdehyde: step 1/1. Catalyzes the reduction of 1-pyrroline-5-carboxylate (PCA) to L-proline. This is Pyrroline-5-carboxylate reductase 3 (proG) from Bacillus subtilis (strain 168).